A 196-amino-acid polypeptide reads, in one-letter code: dTDP-4-dehydro-6-deoxyglucose 3-epimerase (196 aa).

Residues R21, E26, 45–47, and R57 contribute to the substrate site; that span reads QVN. H60 acts as the Proton acceptor in catalysis. Residues K70 and R117 each coordinate substrate. The active-site Proton donor is Y130. Substrate-binding residues include E141 and R166.

The protein belongs to the dTDP-4-dehydrorhamnose 3,5-epimerase family. Homodimer.

The catalysed reaction is dTDP-4-dehydro-6-deoxy-alpha-D-glucose = dTDP-4-dehydro-6-deoxy-alpha-D-allose. It participates in antibiotic biosynthesis. Its function is as follows. Involved in the biosynthesis of dTDP-6-deoxy-D-allose, an intermediate in the biosynthesis of mycinose, which is one of the two unusual sugars attached to the 16-membered macrolactone ring of the aglycone antibiotic chalcomycin. Catalyzes the conversion of dTDP-4-oxo-6-deoxyglucose to dTDP-4-oxo-6-deoxyallose, via a C-3 epimerization. In Streptomyces bikiniensis, this protein is dTDP-4-dehydro-6-deoxyglucose 3-epimerase.